The sequence spans 535 residues: Light-independent protochlorophyllide reductase subunit B (535 aa).

D36 is a [4Fe-4S] cluster binding site. D292 serves as the catalytic Proton donor. Position 428 to 429 (428 to 429 (GL)) interacts with substrate. A disordered region spans residues 446 to 483 (DEASPSESAPHASNGHEDVAGGSTAQSVPSHAATEGDG).

The protein belongs to the ChlB/BchB/BchZ family. As to quaternary structure, protochlorophyllide reductase is composed of three subunits; BchL, BchN and BchB. Forms a heterotetramer of two BchB and two BchN subunits. Requires [4Fe-4S] cluster as cofactor.

The catalysed reaction is chlorophyllide a + oxidized 2[4Fe-4S]-[ferredoxin] + 2 ADP + 2 phosphate = protochlorophyllide a + reduced 2[4Fe-4S]-[ferredoxin] + 2 ATP + 2 H2O. The protein operates within porphyrin-containing compound metabolism; bacteriochlorophyll biosynthesis (light-independent). Its function is as follows. Component of the dark-operative protochlorophyllide reductase (DPOR) that uses Mg-ATP and reduced ferredoxin to reduce ring D of protochlorophyllide (Pchlide) to form chlorophyllide a (Chlide). This reaction is light-independent. The NB-protein (BchN-BchB) is the catalytic component of the complex. This Chlorobium limicola (strain DSM 245 / NBRC 103803 / 6330) protein is Light-independent protochlorophyllide reductase subunit B.